The sequence spans 287 residues: mRNA-capping enzyme regulatory subunit OPG124 (287 aa).

The protein belongs to the orthopoxvirus mRNA-capping enzyme regulatory subunit family. Interacts with the catalytic subunit OPG113.

Its subcellular location is the virion. Its function is as follows. Regulatory subunit of the mRNA cap enzyme which stabilizes the catalytic subunit and enhances its methyltransferase activity through an allosteric mechanism. Heterodimeric mRNA capping enzyme catalyzes the linkage of a N7-methyl-guanosine moiety to the first transcribed nucleotide (cap 0 structure), whereas the methyltransferase OPG102 is responsible for a second methylation at the 2'-O position of the ribose (cap 1 structure). Also involved in early viral gene transcription termination and intermediate viral gene transcription initiation. Early gene transcription termination requires the termination factor VTF, the DNA-dependent ATPase NPH-I/OPG123 and the RAP94/OPG109 subunit of the viral RNA polymerase, as well as the presence of a specific termination motif. Binds, together with RAP94/OPG109, to the termination motif 5'-UUUUUNU-3' in the nascent early mRNA. The polypeptide is mRNA-capping enzyme regulatory subunit OPG124 (OPG124) (Bos taurus (Bovine)).